The sequence spans 217 residues: MAYAAVLLDIEGTVCPISFVKESLFPFFLKQVDTLCSSQDLQVQRLLTQFQVDDVAGHIRSLVARDVKDPILKQLQGLVWENGYKDGQIKAPVYDDAIKFIKNSDVPVYIYSSGSVKAQKLLFQYVESRSNTLDLRPFIKGYFDINTSGVKTQSESYARIANNVGIKPNGVLFISDNPFELDAAKITGMQTMLAVRPGNSEVRDALKYNPVTNFDDL.

Mg(2+) contacts are provided by Asp-9 and Glu-11. Residues 112–113 (SS) and Lys-151 each bind substrate. Asp-176 contacts Mg(2+).

This sequence belongs to the HAD-like hydrolase superfamily. MasA/MtnC family. In terms of assembly, monomer. Mg(2+) serves as cofactor.

It localises to the cytoplasm. The protein localises to the nucleus. It catalyses the reaction 5-methylsulfanyl-2,3-dioxopentyl phosphate + H2O = 1,2-dihydroxy-5-(methylsulfanyl)pent-1-en-3-one + phosphate. The protein operates within amino-acid biosynthesis; L-methionine biosynthesis via salvage pathway; L-methionine from S-methyl-5-thio-alpha-D-ribose 1-phosphate: step 3/6. It functions in the pathway amino-acid biosynthesis; L-methionine biosynthesis via salvage pathway; L-methionine from S-methyl-5-thio-alpha-D-ribose 1-phosphate: step 4/6. Bifunctional enzyme that catalyzes the enolization of 2,3-diketo-5-methylthiopentyl-1-phosphate (DK-MTP-1-P) into the intermediate 2-hydroxy-3-keto-5-methylthiopentenyl-1-phosphate (HK-MTPenyl-1-P), which is then dephosphorylated to form the acireductone 1,2-dihydroxy-3-keto-5-methylthiopentene (DHK-MTPene). The polypeptide is Enolase-phosphatase E1 (Lachancea thermotolerans (strain ATCC 56472 / CBS 6340 / NRRL Y-8284) (Yeast)).